A 282-amino-acid polypeptide reads, in one-letter code: Short-chain dehydrogenase/reductase prx7 (282 aa).

Residues Asn-23, Asn-70, Tyr-150, Lys-154, Val-183, and Thr-185 each contribute to the NADP(+) site. The active-site Proton acceptor is Tyr-150. The active-site Lowers pKa of active site Tyr is the Lys-154.

The protein belongs to the short-chain dehydrogenases/reductases (SDR) family.

It participates in sesquiterpene biosynthesis. Short-chain dehydrogenase/reductase; part of the gene cluster that mediates the biosynthesis of PR-toxin, a bicyclic sesquiterpene belonging to the eremophilane class and acting as a mycotoxin. The first step of the pathway is catalyzed by the aristolochene synthase which performs the cyclization of trans,trans-farnesyl diphosphate (FPP) to the bicyclic sesquiterpene aristolochene. Following the formation of aristolochene, the non-oxygenated aristolochene is converted to the trioxygenated intermediate eremofortin B, via 7-epi-neopetasone. This conversion appears to involve three enzymes, a hydroxysterol oxidase-like enzyme, the quinone-oxidase prx3 that forms the quinone-type-structure in the bicyclic nucleus of aristolochene with the C8-oxo group and the C-3 hydroxyl group, and the P450 monooxygenase prx9 that introduces the epoxide at the double bond between carbons 1 and 2. No monoxy or dioxy-intermediates have been reported to be released to the broth, so these three early oxidative reactions may be coupled together. Eremofortin B is further oxidized by another P450 monooxygenase, that introduces a second epoxide between carbons 7 and 11 prior to acetylation to eremofortin A by the acetyltransferase prx11. The second epoxidation may be performed by a second P450 monooxygenase. After the acetylation step, eremofortin A is converted to eremofortin C and then to PR-toxin. First the conversion of eremofortin A to eremofortin C proceeds by oxidation of the side chain of the molecule at C-12 and is catalyzed by the short-chain oxidoreductase prx1. The cytochrome P450 monooxygenase prx8 also plays a role in this step. The primary alcohol formed at C-12 is finally oxidized by the short-chain alcohol dehydrogenase prx4 that forms PR-toxin. This is Short-chain dehydrogenase/reductase prx7 from Penicillium rubens (strain ATCC 28089 / DSM 1075 / NRRL 1951 / Wisconsin 54-1255) (Penicillium chrysogenum).